Here is a 781-residue protein sequence, read N- to C-terminus: MATQADLMELDMAMEPDRKAAVSHWQQQSYLDSGIHSGATTTAPSLSGKGNPEEEDVDTSQVLYEWEQGFSQSFTQEQVADIDGQYAMTRAQRVRAAMFPETLDEGMQIPSTQFDAAHPTNVQRLAEPSQMLKHAVVNLINYQDDAELATRAIPELTKLLNDEDQVVVNKAAVMVHQLSKKEASRHAIMRSPQMVSAIVRTMQNTNDVETARCTAGTLHNLSHHREGLLAIFKSGGIPALVKMLGSPVDSVLFYAITTLHNLLLHQEGAKMAVRLAGGLQKMVALLNKTNVKFLAITTDCLQILAYGNQESKLIILASGGPQALVNIMRTYTYEKLLWTTSRVLKVLSVCSSNKPAIVEAGGMQALGLHLTDPSQRLVQNCLWTLRNLSDAATKQEGMEGLLGTLVQLLGSDDINVVTCAAGILSNLTCNNYKNKMMVCQVGGIEALVRTVLRAGDREDITEPAICALRHLTSRHQEAEMAQNAVRLHYGLPVVVKLLHPPSHWPLIKATVGLIRNLALCPANHAPLREQGAIPRLVQLLVRAHQDTQRRTSMGGTQQQFVEGVRMEEIVEGCTGALHILARDVHNRIVIRGLNTIPLFVQLLYSPIENIQRVAAGVLCELAQDKEAAEAIEAEGATAPLTELLHSRNEGVATYAAAVLFRMSEDKPQDYKKRLSVELTSSLFRTEPMAWNETADLGLDIGAQGEPLGYRQDDPSYRSFHSGGYGQDALGMDPMMEHEMGGHHPGADYPVDGLPDLGHAQDLMDGLPPGDSNQLAWFDTDL.

A2 carries the N-acetylalanine modification. The interval 2–23 (ATQADLMELDMAMEPDRKAAVS) is interaction with VCL. S23 carries the post-translational modification Phosphoserine; by GSK3-beta; alternate. O-linked (GlcNAc) serine; alternate glycosylation is present at S23. Residue S29 is modified to Phosphoserine; by GSK3-beta. Residues S33 and S37 each carry the phosphoserine; by GSK3-beta and HIPK2 modification. The disordered stretch occupies residues 34-57 (GIHSGATTTAPSLSGKGNPEEEDV). Residue T41 is modified to Phosphothreonine; by GSK3-beta. Residue S45 is modified to Phosphoserine. The residue at position 49 (K49) is an N6-acetyllysine. A Phosphotyrosine; by PTK6 modification is found at Y64. Y142 is modified (phosphotyrosine; by FYN and PTK6). ARM repeat units follow at residues 151-191 (RAIP…IMRS), 193-234 (QMVS…IFKS), 235-276 (GGIP…VRLA), 277-318 (GGLQ…ILAS), 319-360 (GGPQ…IVEA), 361-389 (GGMQ…RNLS), 400-441 (GLLG…VCQV), 442-484 (GGIE…AQNA), 489-530 (YGLP…LREQ), 531-571 (GAIP…EIVE), 594-636 (NTIP…AEGA), and 637-666 (TAPL…SEDK). The interval 156-178 (LTKLLNDEDQVVVNKAAVMVHQL) is interaction with BCL9. A Phosphoserine; by CDK5 modification is found at S191. S246 carries the post-translational modification Phosphoserine; by CDK5. Y331 carries the post-translational modification Phosphotyrosine; by PTK6. Y333 bears the Phosphotyrosine; by SRC and PTK6 mark. S552 carries the phosphoserine modification. (Microbial infection) Phosphothreonine is present on T556. At T556 the chain carries Phosphothreonine. S-nitrosocysteine is present on C619. At S675 the chain carries Phosphoserine. Positions 705–781 (EPLGYRQDDP…NQLAWFDTDL (77 aa)) are disordered. The segment covering 734–745 (MMEHEMGGHHPG) has biased composition (basic and acidic residues). The segment at 772–781 (NQLAWFDTDL) is interaction with SCRIB.

It belongs to the beta-catenin family. Two separate complex-associated pools are found in the cytoplasm. The majority is present as component of an E-cadherin:catenin adhesion complex composed of at least E-cadherin/CDH1 and beta-catenin/CTNNB1, and possibly alpha-catenin/CTNNA1; the complex is located to adherens junctions. The stable association of CTNNA1 is controversial as CTNNA1 was shown not to bind to F-actin when assembled in the complex. Alternatively, the CTNNA1-containing complex may be linked to F-actin by other proteins such as LIMA1. Another cytoplasmic pool is part of a large complex containing AXIN1, AXIN2, APC, CSNK1A1 and GSK3B that promotes phosphorylation on N-terminal Ser and Thr residues and ubiquitination of CTNNB1 via BTRC and its subsequent degradation by the proteasome. Wnt-dependent activation of DVL antagonizes the action of GSK3B. When GSK3B activity is inhibited the complex dissociates, CTNNB1 is dephosphorylated and is no longer targeted for destruction. The stabilized protein translocates to the nucleus, where it binds TCF/LEF-1 family members, BCL9, BCL9L and possibly also RUVBL1 and CHD8. Binds CTNNBIP and EP300. CTNNB1 forms a ternary complex with LEF1 and EP300 that is disrupted by CTNNBIP1 binding. Interacts with TAX1BP3 (via the PDZ domain); this interaction inhibits the transcriptional activity of CTNNB1. Interacts with AJAP1, BAIAP1, CARM1, CTNNA3, CXADR and PCDH11Y. Binds NHERF1. Interacts with GLIS2 and MUC1. Interacts with SLC30A9. Interacts with XIRP1. Interacts directly with AXIN1; the interaction is regulated by CDK2 phosphorylation of AXIN1. Interacts with SCRIB. Interacts with RAPGEF2. Interacts with PTPRU (via the cytoplasmic juxtamembrane domain). Interacts with EMD. Interacts with TNIK and TCF7L2. Interacts with SESTD1 and TRPC4. Interacts with CAV1. Interacts with TRPV4. The TRPV4 and CTNNB1 complex can interact with CDH1. Interacts with VCL. Interacts with PTPRJ. Interacts with PKT7 and CDK2. Interacts with FAT1 (via the cytoplasmic domain). Interacts with NANOS1 and NDRG2. Interacts with isoform 1 of NEK2. Interacts with both isoform 1 and isoform 2 of CDK5. Interacts with PTK6. Interacts with SOX7; this interaction may lead to proteasomal degradation of active CTNNB1 and thus inhibition of Wnt/beta-catenin-stimulated transcription. Identified in a complex with HINT1 and MITF. Interacts with FHIT. The CTNNB1 and TCF7L2/TCF4 complex interacts with PML (isoform PML-4). Interacts with FERMT2. Identified in a complex with TCF7L2/TCF4 and FERMT2. Interacts with RORA. May interact with P-cadherin/CDH3. Interacts with RNF220. Interacts with CTNND2. Interacts (via the C-terminal region) with CBY1. The complex composed, at least, of APC, CTNNB1 and GSK3B interacts with JPT1; the interaction requires the inactive form of GSK3B (phosphorylated at 'Ser-9'). Interacts with DLG5. Interacts with FAM53B; promoting translocation to the nucleus. Interacts with TMEM170B. Interacts with AHI1. Interacts with GID8. Component of an cadherin:catenin adhesion complex composed of at least of CDH26, beta-catenin/CTNNB1, alpha-catenin/CTNNA1 and p120 catenin/CTNND1. Forms a complex comprising APPL1, RUVBL2, APPL2, HDAC1 and HDAC2. Interacts with IRF2BPL; mediates the ubiquitination and degradation of CTNNB1. Interacts with AMFR. Interacts with LMBR1L. Interacts with SOX30; prevents interaction of CTNNB1 with TCF7L2/TCF4 and leads to inhibition of Wnt signaling. Interacts with SOX9; inhibiting CTNNB1 activity by competing with the binding sites of TCF/LEF within CTNNB1, thereby inhibiting the Wnt signaling. Interacts with SPN/CD43 cytoplasmic tail. Interacts (when phosphorylated at Tyr-333) with isoform M2 of PKM (PKM2); promoting transcription activation. Interacts with PKP2 (via HEAD domain). Interacts with CDH1. Interacts (when unphosphorylated) with FLYWCH1, perhaps preventing interaction of CTNNB1 with TCF4, and thereby regulating transcription activation; phosphorylation of CTNNB1 may inhibit the interaction. Interacts (via the central armadillo domains) with probable transcriptional regulator ADNP (via N-terminal region); interaction is direct and stabilizes CTNNB1 by modulating its phosphorylation by glycogen synthase kinase-3 beta GSK3B. Interacts with NR5A2. Interacts with DSG2; the interaction promotes localization of CTNNB1 at cell junctions thus reducing its nuclear localization and subsequent transcription of CTNNB1/TCF-target genes. As to quaternary structure, (Microbial infection) Interacts with herpes virus 8 protein vPK; this interaction inhibits the Wnt signaling pathway. In terms of processing, phosphorylation at Ser-552 by AMPK promotes stabilization of the protein, enhancing TCF/LEF-mediated transcription. Phosphorylation by GSK3B requires prior phosphorylation of Ser-45 by another kinase. Phosphorylation proceeds then from Thr-41 to Ser-37 and Ser-33. Phosphorylated by NEK2. EGF stimulates tyrosine phosphorylation. Phosphorylated on Ser-33 and Ser-37 by HIPK2 and GSK3B, this phosphorylation triggers proteasomal degradation. Phosphorylation on Ser-191 and Ser-246 by CDK5. Phosphorylation by CDK2 regulates insulin internalization. Phosphorylation by PTK6 at Tyr-64, Tyr-142, Tyr-331 and/or Tyr-333 with the predominant site at Tyr-64 is not essential for inhibition of transcriptional activity. Phosphorylation by SRC at Tyr-333 promotes interaction with isoform M2 of PKM (PKM2); promoting transcription activation. Post-translationally, ubiquitinated by the SCF(BTRC) E3 ligase complex when phosphorylated by GSK3B, leading to its degradation. Ubiquitinated by a E3 ubiquitin ligase complex containing UBE2D1, SIAH1, CACYBP/SIP, SKP1, APC and TBL1X, leading to its subsequent proteasomal degradation. Ubiquitinated and degraded following interaction with SOX9. Ubiquitinated via 'Lys-11'- and 'Lys-29'-linked ubiquitin chains by UBR5, leading to its stabilization. S-nitrosylation at Cys-619 within adherens junctions promotes VEGF-induced, NO-dependent endothelial cell permeability by disrupting interaction with E-cadherin, thus mediating disassembly adherens junctions. In terms of processing, O-glycosylation at Ser-23 decreases nuclear localization and transcriptional activity, and increases localization to the plasma membrane and interaction with E-cadherin CDH1. Post-translationally, deacetylated at Lys-49 by SIRT1. Phosphorylated at Thr-556 by herpes virus 1/HHV-1 leading to CTNNB1 inhibition. As to expression, expressed in several hair follicle cell types: basal and peripheral matrix cells, and cells of the outer and inner root sheaths. Expressed in colon. Present in cortical neurons (at protein level). Expressed in breast cancer tissues (at protein level).

The protein resides in the cytoplasm. It localises to the nucleus. The protein localises to the cytoskeleton. Its subcellular location is the cell junction. It is found in the adherens junction. The protein resides in the cell membrane. It localises to the microtubule organizing center. The protein localises to the centrosome. Its subcellular location is the spindle pole. It is found in the synapse. The protein resides in the cilium basal body. Key downstream component of the canonical Wnt signaling pathway. In the absence of Wnt, forms a complex with AXIN1, AXIN2, APC, CSNK1A1 and GSK3B that promotes phosphorylation on N-terminal Ser and Thr residues and ubiquitination of CTNNB1 via BTRC and its subsequent degradation by the proteasome. In the presence of Wnt ligand, CTNNB1 is not ubiquitinated and accumulates in the nucleus, where it acts as a coactivator for transcription factors of the TCF/LEF family, leading to activate Wnt responsive genes. Also acts as a coactivator for other transcription factors, such as NR5A2. Promotes epithelial to mesenchymal transition/mesenchymal to epithelial transition (EMT/MET) via driving transcription of CTNNB1/TCF-target genes. Involved in the regulation of cell adhesion, as component of an E-cadherin:catenin adhesion complex. Acts as a negative regulator of centrosome cohesion. Involved in the CDK2/PTPN6/CTNNB1/CEACAM1 pathway of insulin internalization. Blocks anoikis of malignant kidney and intestinal epithelial cells and promotes their anchorage-independent growth by down-regulating DAPK2. Disrupts PML function and PML-NB formation by inhibiting RANBP2-mediated sumoylation of PML. Promotes neurogenesis by maintaining sympathetic neuroblasts within the cell cycle. Involved in chondrocyte differentiation via interaction with SOX9: SOX9-binding competes with the binding sites of TCF/LEF within CTNNB1, thereby inhibiting the Wnt signaling. Acts as a positive regulator of odontoblast differentiation during mesenchymal tooth germ formation, via promoting the transcription of differentiation factors such as LEF1, BMP2 and BMP4. Activity is repressed in a MSX1-mediated manner at the bell stage of mesenchymal tooth germ formation which prevents premature differentiation of odontoblasts. The sequence is that of Catenin beta-1 from Homo sapiens (Human).